Reading from the N-terminus, the 218-residue chain is MSCSGSGADPEAAPASAASAPGPAPPVSAPAALPSSTAAENKASPAGTAGGPGAGAAAGGTGPLAARAGEPAERRGAAPVSAGGAAPPEGAISNGVYVLPSAANGDVKPVVSSTPLVDFLMQLEDYTPTIPDAVTGYYLNRAGFEASDPRIIRLISLAAQKFISDIANDALQHCKMKGTASGSSRSKSKDRKYTLTMEDLTPALSEYGINVKKPHYFT.

Composition is skewed to low complexity over residues 1–21 and 29–39; these read MSCS…ASAP and APAALPSSTAA. The interval 1 to 85 is disordered; sequence MSCSGSGADP…GAAPVSAGGA (85 aa). At Ser-2 the chain carries N-acetylserine. The residue at position 44 (Ser-44) is a Phosphoserine. Thr-48 carries the post-translational modification Phosphothreonine. A compositionally biased stretch (gly residues) spans 48-62; sequence TAGGPGAGAAAGGTG. The [KR]-[STA]-K motif signature appears at 187 to 189; it reads KSK. The residue at position 189 (Lys-189) is an Allysine; alternate. Lys-189 is modified (N6,N6,N6-trimethyllysine; alternate).

The protein belongs to the TAF10 family. Component of the TFIID basal transcription factor complex, composed of TATA-box-binding protein TBP, and a number of TBP-associated factors (TAFs), including TAF1, TAF2, TAF3, TAF4, TAF5, TAF6, TAF7, TAF8, TAF9, TAF10, TAF11, TAF12 and TAF13. Component of the TATA-binding protein-free TAF complex (TFTC), the PCAF histone acetylase complex and the STAGA transcription coactivator-HAT complex. The PCAF complex consists at least of TADA2L/ADA2, TADA3L/ADA3, SUPT3H, TAF5L TAF6L, TAF9, TAF10, TAF12 and TRRAP. The TFTC-HAT complex consists at least of TAF5L, TAF6L, TADA3L, SUPT3H, TAF2, TAF4, TAF5, GCN5L2/GCN5, TAF10 and TRRAP. The STAGA transcription coactivator-HAT complex consists at least of SUPT3H, GCN5L2, TAF5L, TAF6L, SUPT7L, TADA3L, TAD1L, TAF10, TAF12, TRRAP and TAF9. The STAGA core complex is associated with a subcomplex required for histone deubiquitination composed of ATXN7L3, ENY2 and USP22. Interacts with TAF3. Interacts with LOXL2. Interacts with TAF12 isoform TAFII20; the interaction is direct. In terms of processing, monomethylated at Lys-189 by SETD7, leading to increased affinity for RNA polymerase II. Post-translationally, lysine deamination at Lys-189 to form allysine is mediated by LOXL2. Allysine formation by LOXL2 results in release of TAF10 from promoters, leading to inhibition of TFIID-dependent transcription.

It is found in the nucleus. Functionally, the TFIID basal transcription factor complex plays a major role in the initiation of RNA polymerase II (Pol II)-dependent transcription. TFIID recognizes and binds promoters with or without a TATA box via its subunit TBP, a TATA-box-binding protein, and promotes assembly of the pre-initiation complex (PIC). The TFIID complex consists of TBP and TBP-associated factors (TAFs), including TAF1, TAF2, TAF3, TAF4, TAF5, TAF6, TAF7, TAF8, TAF9, TAF10, TAF11, TAF12 and TAF13. TAF10 is also component of the PCAF histone acetylase complex, the TATA-binding protein-free TAF complex (TFTC) and the STAGA transcription coactivator-HAT complex. May regulate cyclin E expression. This Homo sapiens (Human) protein is Transcription initiation factor TFIID subunit 10 (TAF10).